We begin with the raw amino-acid sequence, 452 residues long: uncharacterized protein (452 aa).

The next 14 helical transmembrane spans lie at 8–28 (AVFL…SSMI), 39–59 (FHLS…ASAV), 77–97 (FLFG…APTF), 100–122 (LLVM…VGLI), 134–156 (LAVL…GFLI), 161–183 (WPAI…LYMF), 203–222 (LGIV…LLSF), 226–243 (PHAV…AFVW), 266–286 (AVYV…FGLP), 302–322 (LFML…GKWI), 330–350 (PIFA…IFFI), 359–379 (LILS…QAAM), 393–415 (GLFQ…ILFG), and 425–447 (MMGI…FAAL).

This sequence belongs to the major facilitator superfamily.

It localises to the cell membrane. This is an uncharacterized protein from Bacillus subtilis (strain 168).